The chain runs to 334 residues: Ferredoxin--NADP reductase (334 aa).

D33, Q41, Y46, A86, F120, D286, and T327 together coordinate FAD.

It belongs to the ferredoxin--NADP reductase type 2 family. Homodimer. FAD is required as a cofactor.

It carries out the reaction 2 reduced [2Fe-2S]-[ferredoxin] + NADP(+) + H(+) = 2 oxidized [2Fe-2S]-[ferredoxin] + NADPH. In Rickettsia prowazekii (strain Madrid E), this protein is Ferredoxin--NADP reductase.